Reading from the N-terminus, the 172-residue chain is Disulfide bond formation protein B (172 aa).

Topologically, residues Met-1 to Pro-13 are cytoplasmic. The chain crosses the membrane as a helical span at residues Trp-14–Phe-30. Over Phe-31–Thr-48 the chain is Periplasmic. An intrachain disulfide couples Cys-40 to Cys-43. A helical membrane pass occupies residues Ala-49–Pro-64. The Cytoplasmic portion of the chain corresponds to Glu-65–Leu-71. A helical membrane pass occupies residues Leu-72–Arg-89. The Periplasmic portion of the chain corresponds to Glu-90 to Ala-145. A disulfide bridge connects residues Cys-105 and Cys-131. The helical transmembrane segment at Trp-146–Ser-164 threads the bilayer. Over Arg-165–Leu-172 the chain is Cytoplasmic.

Belongs to the DsbB family.

It is found in the cell inner membrane. Required for disulfide bond formation in some periplasmic proteins. Acts by oxidizing the DsbA protein. The protein is Disulfide bond formation protein B of Pseudoalteromonas translucida (strain TAC 125).